The following is a 321-amino-acid chain: Leucine-rich repeat-containing protein 46 (321 aa).

LRR repeat units lie at residues Glu-45–Gln-66, Asn-67–Pro-88, Ser-89–Pro-110, and Cys-111–Gln-132. The LRRCT domain occupies Asn-142–Asp-184. A phosphoserine mark is found at Ser-175 and Ser-182. Positions Leu-201–Thr-221 form a coiled coil. The interval Asp-235 to Lys-321 is disordered.

Its subcellular location is the cell projection. It localises to the cilium. It is found in the flagellum. Functionally, required for normal spermatogenesis and male fertility. Plays an important role in sperm flagellum biogenesis. This chain is Leucine-rich repeat-containing protein 46 (LRRC46), found in Homo sapiens (Human).